The sequence spans 275 residues: Putative protein A464R (275 aa).

The RNase III domain occupies 51–175; that stretch reads KEDVEYLIGM…LMGAIYFDLG (125 aa). The DRBM domain maps to 201 to 269; sequence NYKDRLLKHT…SKIALHTMGV (69 aa).

The protein belongs to the ribonuclease III family.

This chain is Putative protein A464R, found in Chlorella (PBCV-1).